We begin with the raw amino-acid sequence, 150 residues long: Calmodulin-like protein 7 (150 aa).

EF-hand domains lie at 1–36, 37–72, 75–110, and 113–148; these read MDPT…LGIY, IPDK…IMDE, EEEE…LGLK, and KTLD…GGFN. Ca(2+)-binding residues include D14, N16, D18, T20, E25, D50, N52, D54, C56, E61, D88, N90, D92, E99, D126, D128, D130, R132, and E137.

The protein belongs to the calmodulin family.

In terms of biological role, potential calcium sensor. In Arabidopsis thaliana (Mouse-ear cress), this protein is Calmodulin-like protein 7 (CML7).